We begin with the raw amino-acid sequence, 288 residues long: T-lymphocyte activation antigen CD80 (288 aa).

Positions 1-34 (MGHTRRQGTSPSKCPYLNFFQLLVLAGLSHFCSG) are cleaved as a signal peptide. The Ig-like V-type domain occupies 35–135 (VIHVTKEVKE…FKREHLAEVT (101 aa)). The Extracellular portion of the chain corresponds to 35-242 (VIHVTKEVKE…TTKQEHFPDN (208 aa)). 2 disulfides stabilise this stretch: C50–C116 and C162–C216. 8 N-linked (GlcNAc...) asparagine glycosylation sites follow: N53, N89, N98, N186, N207, N211, N226, and N232. Residues 145–230 (PSISDFEIPT…GHLRVNQTFN (86 aa)) enclose the Ig-like C2-type domain. The helical transmembrane segment at 243-263 (LLPSWAITLISVNGIFVICCL) threads the bilayer. 4 S-palmitoyl cysteine lipidation sites follow: C261, C262, C266, and C271. Residues 264–288 (TYCFAPRCRERRRNERLRRESVRPV) lie on the Cytoplasmic side of the membrane. Phosphoserine is present on S284.

In terms of assembly, homodimer. Interacts with CTLA4; this interaction inhibits T-cell activation. Interacts with PDL1/CD274; this interaction blocks PDL1/PDCD1 binding and thus PDL1/CD274 inhibitory function. Interacts with CD28. As to quaternary structure, (Microbial infection) Interacts with adenovirus subgroup B fiber proteins. (Microbial infection) Interacts with Orthopoxvirus OPG038/M2 protein, inhibiting the interaction with CTLA4/CD152. In terms of processing, palmitoylated by ZDHHC20; palmitoylation protects CD80 from ubiquitin-mediated degradation, regulating the protein stability, and ensures its accurate plasma membrane localization. Expressed on activated B-cells, macrophages and dendritic cells.

It is found in the cell membrane. Costimulatory molecule that belongs to the immunoglobulin superfamily that plays an important role in T-lymphocyte activation. Acts as the primary auxiliary signal augmenting the MHC/TCR signal in naive T-cells together with the CD28 receptor which is constitutively expressed on the cell surface of T-cells. In turn, activates different signaling pathways such as NF-kappa-B or MAPK leading to the production of different cytokines. In addition, CD28/CD80 costimulatory signal stimulates glucose metabolism and ATP synthesis of T-cells by activating the PI3K/Akt signaling pathway. Also acts as a regulator of PDL1/PDCD1 interactions to limit excess engagement of PDL1 and its inhibitory role in immune responses. Expressed on B-cells, plays a critical role in regulating interactions between B-cells and T-cells in both early and late germinal center responses, which are crucial for the generation of effective humoral immune responses. In terms of biological role, (Microbial infection) Acts as a receptor for adenovirus subgroup B. This Homo sapiens (Human) protein is T-lymphocyte activation antigen CD80 (CD80).